Here is a 387-residue protein sequence, read N- to C-terminus: MASSSLPLSLPFPLRSLTSTTRSLPFQCSPLFFSIPSSIVCFSTQNPDREEVRWLREEQRWIREEQRWIREEQRWIRERESLLQEISDLQLRIQSLESRNSQLGNSIPDTISNIAALLQVLKEKNRISESGLSATPMVLESTREQIVEEVEEEEKRVIIAEEKVRVSEPVKKIKRRILKVGSEGDDVQALQEALLKLGFYSGEEDMEFSSFSSGTASAVKTWQASLGVREDGVMTAELLQRLFMDEDVETDKDEASTMKKEEAGNGAVFTSVTQVPEKKQSIVKDQSDREVDVTQNRVFLLGENRWEDPSRLIGRNKPVDRSESTNTKTRCITCRGEGRLMCLECDGTGEPNIEPQFMEWVGEDTKCPYCEGLGYTVCDVCDGKKNL.

The N-terminal 40 residues, M1–V40, are a transit peptide targeting the chloroplast. Coiled-coil stretches lie at residues E72–S106 and R143–K163. Residues P318–L387 form a CR-type zinc finger.

Interacts with HSP21; the formed complex associates with the plastid-encoded RNA polymerase (PEP) complex not only during transcription initiation, but also during elongation and termination, and with a stronger efficiency in illuminated chloroplasts. Binds to promoter regions of PEP-dependent genes, especially after a heat stress. Interacts with FLN2.

It is found in the plastid. It localises to the chloroplast stroma. The protein resides in the chloroplast nucleoid. The catalysed reaction is Catalyzes the rearrangement of -S-S- bonds in proteins.. Its function is as follows. Exhibits zinc-dependent disulfide isomerase activity. Required for seedling and chloroplast development under heat stress, probably by maintaining plastid-encoded RNA polymerase (PEP)-dependent transcription. In Arabidopsis thaliana (Mouse-ear cress), this protein is Protein disulfide isomerase pTAC5, chloroplastic.